We begin with the raw amino-acid sequence, 300 residues long: Porphobilinogen deaminase (300 aa).

The residue at position 243 (Cys-243) is an S-(dipyrrolylmethanemethyl)cysteine.

Belongs to the HMBS family. As to quaternary structure, monomer. It depends on dipyrromethane as a cofactor.

It carries out the reaction 4 porphobilinogen + H2O = hydroxymethylbilane + 4 NH4(+). It participates in porphyrin-containing compound metabolism; protoporphyrin-IX biosynthesis; coproporphyrinogen-III from 5-aminolevulinate: step 2/4. Tetrapolymerization of the monopyrrole PBG into the hydroxymethylbilane pre-uroporphyrinogen in several discrete steps. This chain is Porphobilinogen deaminase, found in Clostridium novyi (strain NT).